Consider the following 163-residue polypeptide: Low molecular weight protein-tyrosine phosphatase A (163 aa).

The active-site Nucleophile is the Cys11. Arg17 is a catalytic residue. Residue Asp126 is the Proton donor of the active site.

Belongs to the low molecular weight phosphotyrosine protein phosphatase family.

It carries out the reaction O-phospho-L-tyrosyl-[protein] + H2O = L-tyrosyl-[protein] + phosphate. Its function is as follows. Key virulence factor required for mycobacterial survival within host macrophages. Exhibits protein tyrosine phosphatase activity. Functionally, supports mycobacteria survival during infection by modulation of the phagosome maturation and modulation of the normal host signaling pathways, including host innate immune responses and cell apoptosis. This chain is Low molecular weight protein-tyrosine phosphatase A (ptpA), found in Mycobacterium bovis (strain ATCC BAA-935 / AF2122/97).